Consider the following 111-residue polypeptide: Nucleoid-associated protein PputW619_3586 (111 aa).

The disordered stretch occupies residues Glu87 to Phe111.

This sequence belongs to the YbaB/EbfC family. Homodimer.

It is found in the cytoplasm. It localises to the nucleoid. Its function is as follows. Binds to DNA and alters its conformation. May be involved in regulation of gene expression, nucleoid organization and DNA protection. The sequence is that of Nucleoid-associated protein PputW619_3586 from Pseudomonas putida (strain W619).